Here is a 317-residue protein sequence, read N- to C-terminus: L-lactate dehydrogenase 2 (317 aa).

NAD(+) contacts are provided by residues V16, D37, K42, Y68, and 82–83; that span reads GA. Q85 and R91 together coordinate substrate. NAD(+) is bound by residues T104, 121–123, and T146; that span reads ASN. Residue 123–126 participates in substrate binding; it reads NPVD. 151–154 lines the substrate pocket; that stretch reads DTTR. Beta-D-fructose 1,6-bisphosphate-binding residues include R156 and H171. Residue H178 is the Proton acceptor of the active site. The residue at position 223 (Y223) is a Phosphotyrosine. Residue T232 participates in substrate binding.

Belongs to the LDH/MDH superfamily. LDH family. As to quaternary structure, homotetramer.

The protein localises to the cytoplasm. The enzyme catalyses (S)-lactate + NAD(+) = pyruvate + NADH + H(+). Its pathway is fermentation; pyruvate fermentation to lactate; (S)-lactate from pyruvate: step 1/1. Its activity is regulated as follows. Allosterically activated by fructose 1,6-bisphosphate (FBP). In terms of biological role, catalyzes the conversion of lactate to pyruvate. The sequence is that of L-lactate dehydrogenase 2 from Enterococcus faecalis (strain ATCC 700802 / V583).